We begin with the raw amino-acid sequence, 694 residues long: Elongation factor G (694 aa).

The region spanning 8-282 (KDYRNIGIMA…AVIDYLPSPV (275 aa)) is the tr-type G domain. GTP contacts are provided by residues 17-24 (AHIDAGKT), 81-85 (DTPGH), and 135-138 (NKMD).

The protein belongs to the TRAFAC class translation factor GTPase superfamily. Classic translation factor GTPase family. EF-G/EF-2 subfamily.

The protein resides in the cytoplasm. Catalyzes the GTP-dependent ribosomal translocation step during translation elongation. During this step, the ribosome changes from the pre-translocational (PRE) to the post-translocational (POST) state as the newly formed A-site-bound peptidyl-tRNA and P-site-bound deacylated tRNA move to the P and E sites, respectively. Catalyzes the coordinated movement of the two tRNA molecules, the mRNA and conformational changes in the ribosome. The polypeptide is Elongation factor G (Mesomycoplasma hyopneumoniae (strain J / ATCC 25934 / NCTC 10110) (Mycoplasma hyopneumoniae)).